A 231-amino-acid polypeptide reads, in one-letter code: DNA mismatch repair protein MutH (231 aa).

This sequence belongs to the MutH family.

It localises to the cytoplasm. Its function is as follows. Sequence-specific endonuclease that cleaves unmethylated GATC sequences. It is involved in DNA mismatch repair. The polypeptide is DNA mismatch repair protein MutH (Salmonella paratyphi A (strain ATCC 9150 / SARB42)).